Here is a 302-residue protein sequence, read N- to C-terminus: Sulfate adenylyltransferase subunit 2 (302 aa).

It belongs to the PAPS reductase family. CysD subfamily. Heterodimer composed of CysD, the smaller subunit, and CysN.

The catalysed reaction is sulfate + ATP + H(+) = adenosine 5'-phosphosulfate + diphosphate. It functions in the pathway sulfur metabolism; hydrogen sulfide biosynthesis; sulfite from sulfate: step 1/3. With CysN forms the ATP sulfurylase (ATPS) that catalyzes the adenylation of sulfate producing adenosine 5'-phosphosulfate (APS) and diphosphate, the first enzymatic step in sulfur assimilation pathway. APS synthesis involves the formation of a high-energy phosphoric-sulfuric acid anhydride bond driven by GTP hydrolysis by CysN coupled to ATP hydrolysis by CysD. In Sodalis glossinidius (strain morsitans), this protein is Sulfate adenylyltransferase subunit 2.